A 438-amino-acid chain; its full sequence is Na(+)/H(+) antiporter NhaA (438 aa).

11 consecutive transmembrane segments (helical) span residues 23–43 (FGGI…NSFV), 62–82 (FFIG…LFFL), 104–124 (SFPV…YFFL), 133–153 (GFGI…MLLG), 162–182 (VFLI…IALF), 185–205 (TNLK…LALL), 212–232 (SLIP…QSGI), 302–322 (FLAP…NAGV), 337–357 (LGVI…ITFI), 372–392 (WWHI…SMFI), and 410–430 (IAIL…LFLL).

The protein belongs to the NhaA Na(+)/H(+) (TC 2.A.33) antiporter family.

The protein resides in the cell inner membrane. The catalysed reaction is Na(+)(in) + 2 H(+)(out) = Na(+)(out) + 2 H(+)(in). Its function is as follows. Na(+)/H(+) antiporter that extrudes sodium in exchange for external protons. In Helicobacter acinonychis (strain Sheeba), this protein is Na(+)/H(+) antiporter NhaA.